The chain runs to 114 residues: UPF0342 protein SH1117 (114 aa).

Belongs to the UPF0342 family.

The sequence is that of UPF0342 protein SH1117 from Staphylococcus haemolyticus (strain JCSC1435).